An 83-amino-acid polypeptide reads, in one-letter code: Apolipoprotein C-I, basic form (83 aa).

Positions 1 to 26 (MRLFLSLPVLVVVLSIVLEGPAPAQG) are cleaved as a signal peptide.

It belongs to the apolipoprotein C1 family.

The protein localises to the secreted. In terms of biological role, inhibitor of lipoprotein binding to the low density lipoprotein (LDL) receptor, LDL receptor-related protein, and very low density lipoprotein (VLDL) receptor. Associates with high density lipoproteins (HDL) and the triacylglycerol-rich lipoproteins in the plasma and makes up about 10% of the protein of the VLDL and 2% of that of HDL. Appears to interfere directly with fatty acid uptake and is also the major plasma inhibitor of cholesteryl ester transfer protein (CETP). Binds free fatty acids and reduces their intracellular esterification. Modulates the interaction of APOE with beta-migrating VLDL and inhibits binding of beta-VLDL to the LDL receptor-related protein. The chain is Apolipoprotein C-I, basic form (APOC1B) from Pan troglodytes (Chimpanzee).